We begin with the raw amino-acid sequence, 73 residues long: Disintegrin mojastin-2 (73 aa).

One can recognise a Disintegrin domain in the interval glutamate 1 to glycine 73. Cystine bridges form between cysteine 6–cysteine 21, cysteine 8–cysteine 16, cysteine 15–cysteine 38, cysteine 29–cysteine 35, cysteine 34–cysteine 59, and cysteine 47–cysteine 66. The Cell attachment site signature appears at arginine 51–aspartate 53.

The protein belongs to the venom metalloproteinase (M12B) family. P-II subfamily. P-IIa sub-subfamily. As to quaternary structure, monomer (disintegrin). As to expression, expressed by the venom gland.

The protein resides in the secreted. In terms of biological role, inhibits the three processes involved in platelet function (adhesion, activation and aggregation). It inhibits platelet adhesion to fibronectin with an IC(50) of 58.6 nM. It inhibits ATP release from platelet induced by ADP with an IC(50) of 19.5 nM on platelet-rich plasma, probably by binding to ADP receptors (P2RY1 and P2RY12). Finally, it inhibits ADP-induced platelet aggregation with IC(50) of 44.7 nM on platelet-rich plasma and 19.3 nM on whole blood, probably by binding to alpha-IIb/beta-3 (ITGA2B/ITGB3). Functionally, inhibits ADP-induced platelet aggregation (IC(50) = 13.8 nM) probably by binding to alpha-IIb/beta-3 (ITGA2B/ITGB3) located on the platelet surface. The protein is Disintegrin mojastin-2 of Crotalus scutulatus scutulatus (Mojave rattlesnake).